Here is a 103-residue protein sequence, read N- to C-terminus: Large ribosomal subunit protein bL21 (103 aa).

Belongs to the bacterial ribosomal protein bL21 family. Part of the 50S ribosomal subunit. Contacts protein L20.

Functionally, this protein binds to 23S rRNA in the presence of protein L20. The polypeptide is Large ribosomal subunit protein bL21 (Laribacter hongkongensis (strain HLHK9)).